The primary structure comprises 547 residues: Phenylalanine--tRNA ligase beta subunit (547 aa).

The region spanning 269 to 344 (LDVRFMEVDV…IGYGYENITP (76 aa)) is the B5 domain. Mg(2+) is bound by residues Asp-322, Asp-328, Glu-331, and Asp-332.

Belongs to the phenylalanyl-tRNA synthetase beta subunit family. Type 2 subfamily. In terms of assembly, tetramer of two alpha and two beta subunits. Mg(2+) serves as cofactor.

It localises to the cytoplasm. The catalysed reaction is tRNA(Phe) + L-phenylalanine + ATP = L-phenylalanyl-tRNA(Phe) + AMP + diphosphate + H(+). The protein is Phenylalanine--tRNA ligase beta subunit of Archaeoglobus fulgidus (strain ATCC 49558 / DSM 4304 / JCM 9628 / NBRC 100126 / VC-16).